A 360-amino-acid chain; its full sequence is Peptide chain release factor 1 (360 aa).

Q235 carries the post-translational modification N5-methylglutamine.

Belongs to the prokaryotic/mitochondrial release factor family. In terms of processing, methylated by PrmC. Methylation increases the termination efficiency of RF1.

The protein localises to the cytoplasm. Functionally, peptide chain release factor 1 directs the termination of translation in response to the peptide chain termination codons UAG and UAA. The polypeptide is Peptide chain release factor 1 (Burkholderia vietnamiensis (strain G4 / LMG 22486) (Burkholderia cepacia (strain R1808))).